Reading from the N-terminus, the 760-residue chain is Photosystem I P700 chlorophyll a apoprotein A1 (760 aa).

The tract at residues 1–22 is disordered; sequence MTISPPESGEKDKKILESPVKA. Over residues 8–22 the composition is skewed to basic and acidic residues; that stretch reads SGEKDKKILESPVKA. A run of 8 helical transmembrane segments spans residues 76–99, 162–185, 201–225, 309–327, 368–391, 407–433, 455–477, and 551–569; these read IFSA…FHGA, LMAL…FHYH, MNHH…HIGA, IAHH…GHMY, RHAQ…HHMY, LGLF…IAMV, ALIS…LYIH, and LMIH…LILL. [4Fe-4S] cluster contacts are provided by C593 and C602. The next 2 helical transmembrane spans lie at 609 to 630 and 674 to 696; these read HVFL…HFSW and ISMY…MFLF. H685 serves as a coordination point for divinylchlorophyll a'. Divinyl chlorophyll a-binding residues include M693 and Y701. A phylloquinone-binding site is contributed by W702. A helical transmembrane segment spans residues 734-754; it reads AVGVTHFLVGGIATTWAFFHA.

This sequence belongs to the PsaA/PsaB family. In terms of assembly, the PsaA/B heterodimer binds the P700 divinyl chlorophyll special pair and subsequent electron acceptors. PSI consists of a core antenna complex that captures photons, and an electron transfer chain that converts photonic excitation into a charge separation. The cyanobacterial PSI reaction center is composed of one copy each of PsaA,B,C,D,E,F,I,J,K,L,M and X, and forms trimeric complexes. PSI electron transfer chain: 5 divinyl chlorophyll a, 1 divinyl chlorophyll a', 2 phylloquinones and 3 4Fe-4S clusters. PSI core antenna: 90 divinyl chlorophyll a, 22 carotenoids, 3 phospholipids and 1 galactolipid. P700 is a divinyl chlorophyll a/divinyl chlorophyll a' dimer, A0 is one or more divinyl chlorophyll a, A1 is one or both phylloquinones and FX is a shared 4Fe-4S iron-sulfur center. serves as cofactor.

Its subcellular location is the cellular thylakoid membrane. The enzyme catalyses reduced [plastocyanin] + hnu + oxidized [2Fe-2S]-[ferredoxin] = oxidized [plastocyanin] + reduced [2Fe-2S]-[ferredoxin]. Its function is as follows. PsaA and PsaB bind P700, the primary electron donor of photosystem I (PSI), as well as the electron acceptors A0, A1 and FX. PSI is a plastocyanin/cytochrome c6-ferredoxin oxidoreductase, converting photonic excitation into a charge separation, which transfers an electron from the donor P700 chlorophyll pair to the spectroscopically characterized acceptors A0, A1, FX, FA and FB in turn. Oxidized P700 is reduced on the lumenal side of the thylakoid membrane by plastocyanin or cytochrome c6. The chain is Photosystem I P700 chlorophyll a apoprotein A1 from Prochlorococcus marinus (strain MIT 9515).